We begin with the raw amino-acid sequence, 172 residues long: Translation initiation factor IF-3 (172 aa).

This sequence belongs to the IF-3 family. Monomer.

Its subcellular location is the cytoplasm. IF-3 binds to the 30S ribosomal subunit and shifts the equilibrium between 70S ribosomes and their 50S and 30S subunits in favor of the free subunits, thus enhancing the availability of 30S subunits on which protein synthesis initiation begins. The chain is Translation initiation factor IF-3 from Geobacter sulfurreducens (strain ATCC 51573 / DSM 12127 / PCA).